Reading from the N-terminus, the 134-residue chain is Interleukin-5 (134 aa).

A signal peptide spans Met-1–Ala-19. N-linked (GlcNAc...) asparagine glycosylation is found at Asn-76 and Asn-90.

This sequence belongs to the IL-5 family. As to quaternary structure, homodimer; disulfide-linked. Interacts with IL5RA. Interacts with CSF2RB.

The protein resides in the secreted. Homodimeric cytokine expressed predominantly by T-lymphocytes and NK cells that plays an important role in the survival, differentiation, and chemotaxis of eosinophils. Also acts on activated and resting B-cells to induce immunoglobulin production, growth, and differentiation. Mechanistically, exerts its biological effects through a receptor composed of IL5RA subunit and the cytokine receptor common subunit beta/CSF2RB. Binding to the receptor leads to activation of various kinases including LYN, SYK and JAK2 and thereby propagates signals through the RAS-MAPK and JAK-STAT5 pathways respectively. This chain is Interleukin-5 (IL5), found in Felis catus (Cat).